The primary structure comprises 437 residues: MVGFITLAVFIATFAVIYRWAEGSHLAVLAGAAVLVVIGTISGTYTPRMAVQSIYFETLALIFGMAAISALLARSGVYAYLAAGTAELSQGQGRWILVMMALVTYGISLASNSLITVAVVVPVTLTVCFRTGIDPVPVIIAEIIAANLGGSSTMIGDFPNMILASAGKLHFNDFIGGMMPACLILLAVTFLFFEYRQGDWKKAEIPVDLAWVRGEQLRYSDIDHRLLRYGLIIFFITVIGLVLAGPLKVRPGWIAFVAGLTALALGRFKDEEFFSACGGSDILFFGGLFVMVGALTSVGILDWAVAWLEGVTAGHDRVRAILLMWMAAGVTIFVGGGTSAAVFAPVAATLRLDGDGQAAWWALALGIMAGSCAALSGATAGALAMNQYSGFVKRHPELASAAAAGLQFTHREYVRWGLPLMGIFLVLSTVYIAVLAG.

11 helical membrane passes run 26–46 (LAVL…GTYT), 53–73 (SIYF…ALLA), 95–115 (WILV…NSLI), 136–156 (VPVI…TMIG), 174–194 (FIGG…LFFE), 229–249 (YGLI…PLKV), 252–268 (GWIA…LGRF), 281–301 (DILF…VGIL), 320–340 (AILL…GTSA), 358–378 (AAWW…LSGA), and 416–436 (WGLP…AVLA).

This sequence belongs to the arsenite-antimonite (ArsB) efflux (TC 2.A.45) family.

The protein localises to the magnetosome membrane. Its function is as follows. Plays a role in biomineralization; might regulate pH in the magnetosome. The sequence is that of Magnetosome protein MamN from Magnetospirillum gryphiswaldense (strain DSM 6361 / JCM 21280 / NBRC 15271 / MSR-1).